We begin with the raw amino-acid sequence, 107 residues long: Integration host factor subunit beta (107 aa).

The disordered stretch occupies residues arginine 55–glutamine 107. Residues lysine 65–aspartate 101 are compositionally biased toward basic and acidic residues.

Belongs to the bacterial histone-like protein family. In terms of assembly, heterodimer of an alpha and a beta chain.

Functionally, this protein is one of the two subunits of integration host factor, a specific DNA-binding protein that functions in genetic recombination as well as in transcriptional and translational control. The sequence is that of Integration host factor subunit beta from Burkholderia pseudomallei (strain K96243).